Reading from the N-terminus, the 269-residue chain is MTDPVTLPDLLAMKRRGEKIACLTAYDASSAALQDEAGIEVILVGDSLGNVIQGQPTTLSVTLDHMVYHTACVQRAARRALVLADLPFLSYCTPEQAVRSAARLIRDGGAQVVKLEGGRERLDVVRFLTEQNVPVCGHLGLQPQAIHRLGRYALQGRDAESACRMVEDARQLAEAGAMLLVLECIPWELAQEITAAVDIPTIGIGAGRHCDGQVLVWQDMLGMSARLPRFCKDFLAGNAGVREAVSAYVREVKAGIFPGDRHSFGRDGP.

2 residues coordinate Mg(2+): aspartate 46 and aspartate 85. Residues 46 to 47, aspartate 85, and lysine 114 each bind 3-methyl-2-oxobutanoate; that span reads DS. Glutamate 116 lines the Mg(2+) pocket. Glutamate 183 functions as the Proton acceptor in the catalytic mechanism.

It belongs to the PanB family. As to quaternary structure, homodecamer; pentamer of dimers. Requires Mg(2+) as cofactor.

The protein localises to the cytoplasm. The catalysed reaction is 3-methyl-2-oxobutanoate + (6R)-5,10-methylene-5,6,7,8-tetrahydrofolate + H2O = 2-dehydropantoate + (6S)-5,6,7,8-tetrahydrofolate. It participates in cofactor biosynthesis; (R)-pantothenate biosynthesis; (R)-pantoate from 3-methyl-2-oxobutanoate: step 1/2. Functionally, catalyzes the reversible reaction in which hydroxymethyl group from 5,10-methylenetetrahydrofolate is transferred onto alpha-ketoisovalerate to form ketopantoate. The sequence is that of 3-methyl-2-oxobutanoate hydroxymethyltransferase from Methylococcus capsulatus (strain ATCC 33009 / NCIMB 11132 / Bath).